Reading from the N-terminus, the 512-residue chain is Cytochrome P450 monooxygenase cheE (512 aa).

The helical transmembrane segment at Tyr5–Ala27 threads the bilayer. N-linked (GlcNAc...) asparagine glycosylation is found at Asn53, Asn124, and Asn168. Cys455 is a binding site for heme. 2 N-linked (GlcNAc...) asparagine glycosylation sites follow: Asn499 and Asn508.

This sequence belongs to the cytochrome P450 family. It depends on heme as a cofactor.

It localises to the membrane. It functions in the pathway secondary metabolite biosynthesis. Cytochrome P450 monooxygenase; part of the gene cluster that mediates the biosynthesis of chaetoglobosin A which has a unique inhibitory activity against actin polymerization in mammalian cells. Chaetoglobosin A and its intermediates are involved in the morphological differentiation of C.globosum. The first step of the pathway is the synthesis of prochaetoglobosin I via condensation of one acetyl-CoA, 8 malonyl-CoA, and a L-tryptophan molecule by the PKS-NRPS hybrid synthetase cheA, followed by reduction of backbone double bond to install desired geometry by the enoyl reductase cheB. Further multiple oxidation steps performed by the cytochrome P450 monooxygenases cheE and cheG, as well as by the FAD-linked oxidoreductase cheF, lead to the formation of chaetoglobosin A. Depending on the order of action of these reductases, distinct intermediates can be identified. Within the pathway, the cytochrome P450 monooxygenase cheE catalyzes a stereospecific epoxidation on prochaetoglobosin I, cytoglobosin D, and chaetoglobosin J intermediates. The FAD-linked oxidoreductase cheF performs dehydrogenation of the C-20 hydroxyl groups in the 20-dihyrochaetoglobosin A and cytoglobosin D intermediates. Finally, the cytochrome P450 monooxygenase cheG can catalyze the stereospecific dihydroxylation of prochaetoglobosin I and prochaetoglobosin IV at C-19 and C-20, respectively. The Diels-Alderase cheD may play a role in the post-PKS-NRPS biosynthetic steps catalyzing Diels-Alder cyclization. This is Cytochrome P450 monooxygenase cheE from Chaetomium globosum (strain ATCC 6205 / CBS 148.51 / DSM 1962 / NBRC 6347 / NRRL 1970) (Soil fungus).